Consider the following 403-residue polypeptide: Arginine deiminase (403 aa).

The Amidino-cysteine intermediate role is filled by cysteine 388.

This sequence belongs to the arginine deiminase family.

The protein resides in the cytoplasm. It carries out the reaction L-arginine + H2O = L-citrulline + NH4(+). It participates in amino-acid degradation; L-arginine degradation via ADI pathway; carbamoyl phosphate from L-arginine: step 1/2. The sequence is that of Arginine deiminase from Mycoplasma capricolum subsp. capricolum (strain California kid / ATCC 27343 / NCTC 10154).